We begin with the raw amino-acid sequence, 274 residues long: MFRLPLQCVLWGCLLSSVHPEPPTACREKQYLINSQCCSLCQPGWKLVNDCTEVTETECLPCGKGEFLDTWNRETHCHQHKYCDPNLGLRVQQEGTSVTDNICVCKEGRHCTSKACESCVLYHSCSPGFGVKQIATGVSDTICEPCPVGFFSNVSSAFEKCRPWTRCETKGLAEQQAGTDKTDAVCGPQNRLRLLVVIPIMLGILFAILLVLVFIKKVDRKPQDKAPCTKQIPQEIDDLPGPNPTPPVQETLHGCQPVAQEDGKESRISVQERQ.

Residues 1 to 20 form the signal peptide; it reads MFRLPLQCVLWGCLLSSVHP. The Extracellular portion of the chain corresponds to 21 to 194; the sequence is EPPTACREKQ…VCGPQNRLRL (174 aa). TNFR-Cys repeat units lie at residues 25–60, 61–103, 104–144, and 145–187; these read ACRE…TECL, PCGK…DNIC, VCKE…TICE, and PCPV…AVCG. 8 disulfide bridges follow: Cys26-Cys37, Cys38-Cys51, Cys41-Cys59, Cys62-Cys77, Cys83-Cys103, Cys105-Cys119, Cys111-Cys116, and Cys125-Cys143. The N-linked (GlcNAc...) asparagine glycan is linked to Asn153. The helical transmembrane segment at 195 to 215 threads the bilayer; that stretch reads LVVIPIMLGILFAILLVLVFI. Over 216 to 274 the chain is Cytoplasmic; that stretch reads KKVDRKPQDKAPCTKQIPQEIDDLPGPNPTPPVQETLHGCQPVAQEDGKESRISVQERQ. The disordered stretch occupies residues 224 to 274; sequence DKAPCTKQIPQEIDDLPGPNPTPPVQETLHGCQPVAQEDGKESRISVQERQ. Residues 261–274 show a composition bias toward basic and acidic residues; it reads EDGKESRISVQERQ.

In terms of assembly, monomer and homodimer. Interacts with TRAF1, TRAF2, TRAF3, TRAF5 and TRAF6. Interacts with TRAF6 and MAP3K8; the interaction is required for ERK activation.

The protein resides in the membrane. Its function is as follows. Receptor for TNFSF5/CD40LG. Transduces TRAF6- and MAP3K8-mediated signals that activate ERK in macrophages and B cells, leading to induction of immunoglobulin secretion. The protein is Tumor necrosis factor receptor superfamily member 5 (CD40) of Callithrix jacchus (White-tufted-ear marmoset).